The sequence spans 1893 residues: Transcription initiation factor TFIID subunit 1 (1893 aa).

In terms of domain architecture, Protein kinase 1 spans 1–435 (MGPGCDLLLR…VTQLHWEDDI (435 aa)). Ser137 carries the phosphoserine; by autocatalysis modification. Disordered regions lie at residues 155–184 (LMPP…NGEG) and 197–224 (ASEK…AESE). A compositionally biased stretch (pro residues) spans 156–165 (MPPPPPPPGP). A compositionally biased stretch (low complexity) spans 197-208 (ASEKVDFSSSSD). Ser328 is modified (phosphoserine; by autocatalysis). Positions 534-557 (IPDEKEEATSNSPSKESKKESSLK) are disordered. The tract at residues 538-997 (KEEATSNSPS…KIPNKPTQQK (460 aa)) is histone acetyltransferase (HAT). An N6-acetyllysine modification is found at Lys565. Residues Lys570 and Lys583 each participate in a glycyl lysine isopeptide (Lys-Gly) (interchain with G-Cter in SUMO2) cross-link. Disordered regions lie at residues 990 to 1009 (PNKP…KKTV), 1128 to 1148 (MLQN…QERK), 1158 to 1177 (GSAA…VTSL), and 1254 to 1278 (RLKR…MKER). Basic and acidic residues-rich tracts occupy residues 995–1004 (QQKDDKEPQP) and 1139–1148 (SREREEQERK). The segment at residues 1216 to 1294 (VRIRTTKDEE…CGACGAIGHM (79 aa)) is a DNA-binding region (HMG box; involved in promoter binding). A compositionally biased stretch (basic and acidic residues) spans 1254–1270 (RLKRNQEKEKLKGPPEK). An interaction with ASF1A and ASF1B region spans residues 1363–1650 (VLKFPKQQLP…TAKEAALEEA (288 aa)). Positions 1372 to 1379 (PPKKKRRV) match the Nuclear localization signal motif. 2 consecutive Bromo domains span residues 1397-1505 (RRRT…LKEK) and 1519-1628 (LLDD…LTEY). Residues 1446–1893 (MDLQTLRENV…AGDSDLDSDE (448 aa)) enclose the Protein kinase 2 domain. The interval 1651 to 1676 (ELESLDPMTPGPYTPQPPDLYDTNTS) is disordered. Pro residues predominate over residues 1659–1668 (TPGPYTPQPP). Ser1690, Ser1693, Ala1718, Glu1721, and Gly1723 each carry phosphoserine. Residues 1696-1893 (DIPSATPEKQ…AGDSDLDSDE (198 aa)) are disordered. 2 stretches are compositionally biased toward acidic residues: residues 1709 to 1723 (EGED…EEEG) and 1741 to 1756 (EGED…EEGD). Ser1799, Ser1802, and Ser1820 each carry phosphoserine. Residues 1830-1840 (KSNTQDTSFSS) are compositionally biased toward polar residues. Residues 1846–1857 (VSEEEEDEEEEE) are compositionally biased toward acidic residues. Ser1847 is subject to Phosphoserine. The segment covering 1860-1869 (SGPSVLSQVH) has biased composition (polar residues).

This sequence belongs to the TAF1 family. As to quaternary structure, component of the TFIID basal transcription factor complex, composed of TATA-box-binding protein TBP, and a number of TBP-associated factors (TAFs), including TAF1, TAF2, TAF3, TAF4, TAF5, TAF6, TAF7, TAF8, TAF9, TAF10, TAF11, TAF12 and TAF13. Interacts with TAF7; the interaction is direct. TAF1, when part of the TFIID complex, interacts with C-terminus of TP53. Part of a TFIID-containing RNA polymerase II pre-initiation complex that is composed of TBP and at least GTF2A1, GTF2A2, GTF2E1, GTF2E2, GTF2F1, GTF2H2, GTF2H3, GTF2H4, GTF2H5, GTF2B, TCEA1, ERCC2, ERCC3, TAF1, TAF2, TAF3, TAF4, TAF5, TAF6, TAF7, TAF8, TAF9, TAF10, TAF11, TAF12 and TAF13. Component of some MLL1/MLL complex, at least composed of the core components KMT2A/MLL1, ASH2L, HCFC1/HCF1, WDR5 and RBBP5, as well as the facultative components BACC1, CHD8, E2F6, HSP70, INO80C, KANSL1, LAS1L, MAX, MCRS1, MGA, KAT8/MOF, PELP1, PHF20, PRP31, RING2, RUVB1/TIP49A, RUVB2/TIP49B, SENP3, TAF1, TAF4, TAF6, TAF7, TAF9 and TEX10. RB1 interacts with the N-terminal domain of TAF1. Interacts with ASF1A and ASF1B. Interacts (via bromo domains) with acetylated lysine residues on the N-terminus of histone H1.4, H2A, H2B, H3 and H4 (in vitro). (Microbial infection) Interacts with SV40 Large T antigen. In terms of assembly, (Microbial infection) Interacts with herpes simplex virus 1 ICP4. It depends on Mg(2+) as a cofactor. Post-translationally, phosphorylated by casein kinase II in vitro.

The protein localises to the nucleus. The catalysed reaction is L-seryl-[protein] + ATP = O-phospho-L-seryl-[protein] + ADP + H(+). The enzyme catalyses L-threonyl-[protein] + ATP = O-phospho-L-threonyl-[protein] + ADP + H(+). It catalyses the reaction L-lysyl-[protein] + acetyl-CoA = N(6)-acetyl-L-lysyl-[protein] + CoA + H(+). Autophosphorylates on Ser residues. Inhibited by retinoblastoma tumor suppressor protein, RB1. Binding to TAF7 or CIITA inhibits the histone acetyltransferase activity. The TFIID basal transcription factor complex plays a major role in the initiation of RNA polymerase II (Pol II)-dependent transcription. TFIID recognizes and binds promoters with or without a TATA box via its subunit TBP, a TATA-box-binding protein, and promotes assembly of the pre-initiation complex (PIC). The TFIID complex consists of TBP and TBP-associated factors (TAFs), including TAF1, TAF2, TAF3, TAF4, TAF5, TAF6, TAF7, TAF8, TAF9, TAF10, TAF11, TAF12 and TAF13. TAF1 is the largest component and core scaffold of the TFIID complex, involved in nucleating complex assembly. TAF1 forms a promoter DNA binding subcomplex of TFIID, together with TAF7 and TAF2. Contains novel N- and C-terminal Ser/Thr kinase domains which can autophosphorylate or transphosphorylate other transcription factors. Phosphorylates TP53 on 'Thr-55' which leads to MDM2-mediated degradation of TP53. Phosphorylates GTF2A1 and GTF2F1 on Ser residues. Possesses DNA-binding activity. Essential for progression of the G1 phase of the cell cycle. Exhibits histone acetyltransferase activity towards histones H3 and H4. This is Transcription initiation factor TFIID subunit 1 from Homo sapiens (Human).